The following is a 215-amino-acid chain: 3-isopropylmalate dehydratase small subunit (215 aa).

This sequence belongs to the LeuD family. LeuD type 1 subfamily. As to quaternary structure, heterodimer of LeuC and LeuD.

It carries out the reaction (2R,3S)-3-isopropylmalate = (2S)-2-isopropylmalate. Its pathway is amino-acid biosynthesis; L-leucine biosynthesis; L-leucine from 3-methyl-2-oxobutanoate: step 2/4. Functionally, catalyzes the isomerization between 2-isopropylmalate and 3-isopropylmalate, via the formation of 2-isopropylmaleate. The sequence is that of 3-isopropylmalate dehydratase small subunit from Leptothrix cholodnii (strain ATCC 51168 / LMG 8142 / SP-6) (Leptothrix discophora (strain SP-6)).